The chain runs to 64 residues: Conotoxin Im11.2 (64 aa).

The first 26 residues, 1–26 (MMFRLTSVSCFLLVIVCLNLVVLTNA), serve as a signal peptide directing secretion. 4 disulfides stabilise this stretch: Cys27/Cys41, Cys34/Cys46, Cys40/Cys50, and Cys45/Cys54. The residue at position 57 (Asp57) is an Aspartic acid 1-amide. Residues 61–64 (ATFQ) constitute a propeptide that is removed on maturation.

The protein belongs to the conotoxin I2 superfamily. In terms of tissue distribution, expressed by the venom duct.

Its subcellular location is the secreted. The chain is Conotoxin Im11.2 from Conus imperialis (Imperial cone).